Consider the following 689-residue polypeptide: Glycine--tRNA ligase beta subunit (689 aa).

The protein belongs to the class-II aminoacyl-tRNA synthetase family. Tetramer of two alpha and two beta subunits.

It is found in the cytoplasm. The catalysed reaction is tRNA(Gly) + glycine + ATP = glycyl-tRNA(Gly) + AMP + diphosphate. In Shewanella baltica (strain OS185), this protein is Glycine--tRNA ligase beta subunit.